Reading from the N-terminus, the 398-residue chain is Carboxyaminopropylagmatine dehydrogenase (398 aa).

This sequence belongs to the saccharopine dehydrogenase family.

The enzyme catalyses N(1)-[(S)-3-amino-3-carboxypropyl]agmatine + NADP(+) + H2O = L-aspartate 4-semialdehyde + agmatine + NADPH + H(+). Its pathway is amine and polyamine biosynthesis; spermidine biosynthesis. In terms of biological role, dehydrogenase involved in the biosynthesis of spermidine via the carboxyaminopropylagmatine (CAPA) pathway. Catalyzes the reductive condensation of agmatine and L-aspartate-beta-semialdehyde (ASA) into CAPA. Shows activity toward putrescine and 1,3-diaminopropane, but the catalytic efficiency is three to four orders of magnitude lower than that for agmatine. Cannot use cadaverine or spermidine. This chain is Carboxyaminopropylagmatine dehydrogenase, found in Synechocystis sp. (strain ATCC 27184 / PCC 6803 / Kazusa).